The chain runs to 103 residues: Large ribosomal subunit protein uL24 (103 aa).

The protein belongs to the universal ribosomal protein uL24 family. In terms of assembly, part of the 50S ribosomal subunit.

Its function is as follows. One of two assembly initiator proteins, it binds directly to the 5'-end of the 23S rRNA, where it nucleates assembly of the 50S subunit. Functionally, one of the proteins that surrounds the polypeptide exit tunnel on the outside of the subunit. The protein is Large ribosomal subunit protein uL24 of Agathobacter rectalis (strain ATCC 33656 / DSM 3377 / JCM 17463 / KCTC 5835 / VPI 0990) (Eubacterium rectale).